A 391-amino-acid polypeptide reads, in one-letter code: Na(+)/H(+) antiporter NhaA (391 aa).

The next 11 helical transmembrane spans lie at alanine 14–leucine 34, leucine 59–valine 79, serine 95–phenylalanine 115, valine 124–leucine 144, valine 154–phenylalanine 174, threonine 177–leucine 197, leucine 213–isoleucine 233, phenylalanine 261–leucine 281, isoleucine 292–valine 312, valine 331–valine 351, and leucine 363–valine 383.

Belongs to the NhaA Na(+)/H(+) (TC 2.A.33) antiporter family.

It is found in the cell inner membrane. It catalyses the reaction Na(+)(in) + 2 H(+)(out) = Na(+)(out) + 2 H(+)(in). Its function is as follows. Na(+)/H(+) antiporter that extrudes sodium in exchange for external protons. The protein is Na(+)/H(+) antiporter NhaA of Shewanella pealeana (strain ATCC 700345 / ANG-SQ1).